The sequence spans 174 residues: FMN reductase (NADH) RutF (174 aa).

This sequence belongs to the non-flavoprotein flavin reductase family. RutF subfamily.

It catalyses the reaction FMNH2 + NAD(+) = FMN + NADH + 2 H(+). Catalyzes the reduction of FMN to FMNH2 which is used to reduce pyrimidine by RutA via the Rut pathway. This chain is FMN reductase (NADH) RutF, found in Agrobacterium fabrum (strain C58 / ATCC 33970) (Agrobacterium tumefaciens (strain C58)).